Here is a 92-residue protein sequence, read N- to C-terminus: Small ribosomal subunit protein uS19 (92 aa).

This sequence belongs to the universal ribosomal protein uS19 family.

Protein S19 forms a complex with S13 that binds strongly to the 16S ribosomal RNA. In Dinoroseobacter shibae (strain DSM 16493 / NCIMB 14021 / DFL 12), this protein is Small ribosomal subunit protein uS19.